A 302-amino-acid polypeptide reads, in one-letter code: Deoxyhypusine hydroxylase (302 aa).

Methionine 1 is subject to N-acetylmethionine. 5 HEAT-like PBS-type repeats span residues leucine 54 to aspartate 80, valine 87 to aspartate 113, glutamate 174 to cysteine 200, phenylalanine 205 to arginine 231, and valine 238 to aspartate 264. Histidine 56, histidine 89, and glutamate 90 together coordinate Fe cation. 3 residues coordinate Fe cation: histidine 207, histidine 240, and glutamate 241.

It belongs to the deoxyhypusine hydroxylase family. It depends on Fe(2+) as a cofactor.

It carries out the reaction [eIF5A protein]-deoxyhypusine + AH2 + O2 = [eIF5A protein]-hypusine + A + H2O. Its pathway is protein modification; eIF5A hypusination. Functionally, catalyzes the hydroxylation of the N(6)-(4-aminobutyl)-L-lysine intermediate produced by deoxyhypusine synthase/DHPS on a critical lysine of the eukaryotic translation initiation factor 5A/eIF-5A. This is the second step of the post-translational modification of that lysine into an unusual amino acid residue named hypusine. Hypusination is unique to mature eIF-5A factor and is essential for its function. The chain is Deoxyhypusine hydroxylase from Homo sapiens (Human).